A 329-amino-acid polypeptide reads, in one-letter code: Calcium homeostasis modulator protein (329 aa).

Topologically, residues 1–14 (MTTSINSVVTVFQN) are cytoplasmic. The helical transmembrane segment at 15 to 35 (VFTNHGSTLLNGILIATTVGG) threads the bilayer. The Extracellular portion of the chain corresponds to 36-53 (QSLVRKLTFSCPCAYPLN). The helical transmembrane segment at 54–74 (IYHSLVFMFGPTAALLLIGIT) threads the bilayer. The Cytoplasmic segment spans residues 75-103 (VNSTTWKLAHGFFFRVRDTRHSWKTTCVS). A helical transmembrane segment spans residues 104-124 (WIEVLIQSSVAPIAWLFVVFL). Residues 125-191 (DGGYYRCYRS…DASYLEAESQ (67 aa)) lie on the Extracellular side of the membrane. N-linked (GlcNAc...) asparagine glycosylation occurs at Asn148. Residues 192–212 (IYAWGLLLFSGVAAFLVITCN) traverse the membrane as a helical segment. Over 213–329 (RMCDKYTLVQ…QIIVDETKED (117 aa)) the chain is Cytoplasmic.

The protein belongs to the CALHM family. In terms of tissue distribution, expressed in head and body wall muscles, IL2, ASG, ASI, ASJ, PHA and PHB sensory neurons, and spermatheca.

The protein resides in the cell membrane. Functionally, pore-forming subunit of a voltage-gated ion channel. Permeable to monovalent cations, divalent cations and anions with selectivity Ca(2+) &gt; Mg(2+) &gt; Na(+) = K(+) &gt; Cl(-). Acts both as a voltage-gated and calcium-activated ion channel. Required for normal locomotion. In Caenorhabditis elegans, this protein is Calcium homeostasis modulator protein.